The chain runs to 265 residues: Ribosomal RNA small subunit methyltransferase A (265 aa).

Residues His-17, Leu-19, Gly-44, Glu-65, Asp-90, and Asn-112 each contribute to the S-adenosyl-L-methionine site.

This sequence belongs to the class I-like SAM-binding methyltransferase superfamily. rRNA adenine N(6)-methyltransferase family. RsmA subfamily.

It is found in the cytoplasm. It carries out the reaction adenosine(1518)/adenosine(1519) in 16S rRNA + 4 S-adenosyl-L-methionine = N(6)-dimethyladenosine(1518)/N(6)-dimethyladenosine(1519) in 16S rRNA + 4 S-adenosyl-L-homocysteine + 4 H(+). Functionally, specifically dimethylates two adjacent adenosines (A1518 and A1519) in the loop of a conserved hairpin near the 3'-end of 16S rRNA in the 30S particle. May play a critical role in biogenesis of 30S subunits. This chain is Ribosomal RNA small subunit methyltransferase A, found in Xylella fastidiosa (strain 9a5c).